A 116-amino-acid polypeptide reads, in one-letter code: Small ribosomal subunit protein bS18c (116 aa).

Residues Met-1–Arg-13 show a composition bias toward polar residues. A disordered region spans residues Met-1–Arg-51. Over residues Asn-14–Pro-34 the composition is skewed to basic residues. Residues Ser-35–Ser-49 show a composition bias toward polar residues.

The protein belongs to the bacterial ribosomal protein bS18 family. Part of the 30S ribosomal subunit.

It is found in the plastid. The protein localises to the chloroplast. The protein is Small ribosomal subunit protein bS18c of Cryptomeria japonica (Japanese cedar).